The sequence spans 884 residues: Probable disease resistance protein At1g12290 (884 aa).

Residues L26–Q66 are a coiled coil. The 305-residue stretch at A139–N443 folds into the NB-ARC domain. G182–T189 contributes to the ATP binding site. LRR repeat units lie at residues V519–P540, K541–S563, R566–L588, S590–K612, K613–S635, and N644–E664.

This sequence belongs to the disease resistance NB-LRR family.

Functionally, probable disease resistance protein. This chain is Probable disease resistance protein At1g12290, found in Arabidopsis thaliana (Mouse-ear cress).